A 493-amino-acid polypeptide reads, in one-letter code: Amino acid permease 2 (493 aa).

Residues 1–49 (MGETAAANNHRHHHHHGHQVFDVASHDFVPPQPAFKCFDDDGRLKRTGT) lie on the Cytoplasmic side of the membrane. The next 2 helical transmembrane spans lie at 50 to 70 (VWTASAHIITAVIGSGVLSLA) and 71 to 91 (WAIAQLGWIAGPAVMLLFSLV). Topologically, residues 92–138 (TLYSSTLLSDCYRTGDAVSGKRNYTYMDAVRSILGGFKFKICGLIQY) are cytoplasmic. A helical transmembrane segment spans residues 139 to 159 (LNLFGIAIGYTIAASISMMAI). The Extracellular segment spans residues 160-175 (KRSNCFHKSGGKDPCH). Residues 176 to 196 (MSSNPYMIVFGVAEILLSQVP) traverse the membrane as a helical segment. Residues 197-200 (DFDQ) lie on the Cytoplasmic side of the membrane. The chain crosses the membrane as a helical span at residues 201 to 221 (IWWISIVAAVMSFTYSAIGLA). Residues 222 to 253 (LGIVQVAANGVFKGSLTGISIGTVTQTQKIWR) lie on the Extracellular side of the membrane. Residues 254 to 274 (TFQALGDIAFAYSYSVVLIEI) form a helical membrane-spanning segment. At 275–293 (QDTVRSPPAESKTMKKATK) the chain is on the cytoplasmic side. Residues 294-314 (ISIAVTTIFYMLCGSMGYAAF) traverse the membrane as a helical segment. The Extracellular segment spans residues 315-340 (GDAAPGNLLTGFGFYNPFWLLDIANA). The chain crosses the membrane as a helical span at residues 341 to 361 (AIVVHLVGAYQVFAQPIFAFI). Residues 362–396 (EKSVAERYPDNDFLSKEFEIRIPGFKSPYKVNVFR) are Cytoplasmic-facing. A helical transmembrane segment spans residues 397–417 (MVYRSGFVVTTTVISMLMPFF). Residues 418 to 419 (ND) are Extracellular-facing. A helical membrane pass occupies residues 420–440 (VVGILGALGFWPLTVYFPVEM). Residues 441-458 (YIKQRKVEKWSTRWVCLQ) are Cytoplasmic-facing. A helical membrane pass occupies residues 459-479 (MLSVACLVISVVAGVGSIAGV). Topologically, residues 480–493 (MLDLKVYKPFKSTY) are extracellular.

The protein belongs to the amino acid/polyamine transporter 2 family. Amino acid/auxin permease (AAAP) (TC 2.A.18.2) subfamily. As to expression, highly expressed in developing pods. Found in the vascular strands of siliques, cotyledons, leaves and roots, in the inner phloem of stems, and in the funiculi. Lower levels of expression in flowers. Not expressed in seeds.

It localises to the cell membrane. Inhibited by diethylpyrocarbonate (DEPC). In terms of biological role, amino acid-proton symporter. Stereospecific transporter with a broad specificity for histidine, arginine, glutamate and neutral amino acids, favoring small amino acids such as alanine, asparagine and glutamine. Also accepts large aromatic residues such as phenlalanine or tyrosine. Has a much higher affinity for basic amino acids as compared with AAP1. May function in xylem-to-phloem transfer and in uptake of amino acids assimilated in the green silique tissue. In Arabidopsis thaliana (Mouse-ear cress), this protein is Amino acid permease 2 (AAP2).